A 355-amino-acid polypeptide reads, in one-letter code: U5 small nuclear ribonucleoprotein 40 kDa protein (355 aa).

7 WD repeats span residues 60-99, 103-142, 145-185, 187-226, 230-269, 280-319, and 322-355; these read GHKG…INYS, GHKG…LIKR, EHSG…STHL, QHKY…DPLY, SHQD…PPNR, NFEK…LQYC, and GHSG…EIKP.

In terms of assembly, component of the pre-catalytic and catalytic spliceosome complexes. Component of the postcatalytic spliceosome P complex. Part of the U5 snRNP complex. Component of the U4/U6-U5 tri-snRNP complex.

It localises to the nucleus. Functionally, required for pre-mRNA splicing as component of the activated spliceosome. Component of the U5 small nuclear ribonucleoprotein (snRNP) complex and the U4/U6-U5 tri-snRNP complex, building blocks of the spliceosome. This is U5 small nuclear ribonucleoprotein 40 kDa protein (snrnp40) from Dictyostelium discoideum (Social amoeba).